The sequence spans 345 residues: Anthranilate phosphoribosyltransferase (345 aa).

5-phospho-alpha-D-ribose 1-diphosphate is bound by residues glycine 80, 83–84, threonine 88, 90–93, 108–116, and serine 120; these read GD, NIST, and KHGNRSVSS. Glycine 80 is an anthranilate binding site. Mg(2+) is bound at residue serine 92. Residue asparagine 111 participates in anthranilate binding. Anthranilate is bound at residue arginine 166. The Mg(2+) site is built by aspartate 225 and glutamate 226.

This sequence belongs to the anthranilate phosphoribosyltransferase family. In terms of assembly, homodimer. It depends on Mg(2+) as a cofactor.

The catalysed reaction is N-(5-phospho-beta-D-ribosyl)anthranilate + diphosphate = 5-phospho-alpha-D-ribose 1-diphosphate + anthranilate. It participates in amino-acid biosynthesis; L-tryptophan biosynthesis; L-tryptophan from chorismate: step 2/5. In terms of biological role, catalyzes the transfer of the phosphoribosyl group of 5-phosphorylribose-1-pyrophosphate (PRPP) to anthranilate to yield N-(5'-phosphoribosyl)-anthranilate (PRA). The sequence is that of Anthranilate phosphoribosyltransferase from Pelotomaculum thermopropionicum (strain DSM 13744 / JCM 10971 / SI).